The following is a 608-amino-acid chain: MATGQLFSRNTQALFYNYKQLPIQRMLDFDFLCGRETPSVAGIINPGSEGFQKLFFGQEEIAIPVHAAIEAACAAHPTADVFINFASFRSAAASSMAALKQPTIKVVAIIAEGVPESDTKQLIAYARANNKVIIGPATVGGVQAGAFKIGDTAGTIDNIIQCKLYRPGSVGFVSKSGGMSNEMYNTIARVTDGIYEGIAIGGDVFPGSTLSDHILRFNNIPQIKMVVVLGELGGRDEYSLVEAMKQGKVTKPVVAWVSGTCARLFKSEVQFGHAGAKSGGEMESAQAKNQALQDAGATVPTSFEALEVAIKETFDKLVEEGKVSPIKEVTPPQIPEDLSSAIKSGKVRAPTHIISTISDDRGEEPCYAGVPMSSIIEQGYGVGDVISLLWFKRSLPRYCTKFIEICIMLCADHGPCVSGAHNTIVTARAGKDLVSSLVSGLLTIGPRFGGAIDDAARYFKDACDRNLTPYEFVEGMKKKGIRVPGIGHRIKSRDNRDKRVELLQKFARSNFPAVKYMEYAVQVETYTLSKANNLVLNVDGAIGSLFLDLLAGSGMFTKQEIDEIVQIGYLNGLFVLARSIGLIGHTFDQKRLKQPLYRHPWEDVLYTK.

ATP-binding positions include 214–234 and 265–291; these read ILRFNNIPQIKMVVVLGELGG and FKSEVQFGHAGAKSGGEMESAQAKNQA. Mg(2+) is bound at residue Glu-231. His-273 serves as the catalytic Tele-phosphohistidine intermediate. Residue 292-302 coordinates CoA; sequence LQDAGATVPTS.

This sequence belongs to the succinate/malate CoA ligase alpha subunit family. Heterooctamer of 4 alpha and 4 beta chains.

The protein localises to the cytoplasm. It localises to the cytosol. The enzyme catalyses oxaloacetate + acetyl-CoA + ADP + phosphate = citrate + ATP + CoA. Its function is as follows. ATP citrate-lyase is the primary enzyme responsible for the synthesis of cytosolic acetyl-CoA, used for the elongation of fatty acids and biosynthesis of isoprenoids, flavonoids and malonated derivatives. May supply substrate to the cytosolic acetyl-CoA carboxylase, which generates the malonyl-CoA used for the synthesis of a multitude of compounds, including very long chain fatty acids and flavonoids. Required for normal growth and development and elongation of C18 fatty acids to C20 to C24 fatty acids in seeds. In contrast to all known animal ACL enzymes having a homomeric structure, plant ACLs are composed of alpha and beta chains. The protein is ATP-citrate synthase beta chain protein 1 (ACLB-1) of Arabidopsis thaliana (Mouse-ear cress).